The sequence spans 370 residues: Probable dual-specificity RNA methyltransferase RlmN (370 aa).

The active-site Proton acceptor is Glu-91. The Radical SAM core domain occupies 97–329; that stretch reads QHYGLSVCVT…KKNGVNCVVR (233 aa). Cys-104 and Cys-340 are joined by a disulfide. Cys-111, Cys-115, and Cys-118 together coordinate [4Fe-4S] cluster. Residues 163-164, Ser-195, 218-220, and Asn-296 contribute to the S-adenosyl-L-methionine site; these read GE and SLH. Residue Cys-340 is the S-methylcysteine intermediate of the active site.

It belongs to the radical SAM superfamily. RlmN family. [4Fe-4S] cluster serves as cofactor.

The protein resides in the cytoplasm. The enzyme catalyses adenosine(2503) in 23S rRNA + 2 reduced [2Fe-2S]-[ferredoxin] + 2 S-adenosyl-L-methionine = 2-methyladenosine(2503) in 23S rRNA + 5'-deoxyadenosine + L-methionine + 2 oxidized [2Fe-2S]-[ferredoxin] + S-adenosyl-L-homocysteine. It carries out the reaction adenosine(37) in tRNA + 2 reduced [2Fe-2S]-[ferredoxin] + 2 S-adenosyl-L-methionine = 2-methyladenosine(37) in tRNA + 5'-deoxyadenosine + L-methionine + 2 oxidized [2Fe-2S]-[ferredoxin] + S-adenosyl-L-homocysteine. Functionally, specifically methylates position 2 of adenine 2503 in 23S rRNA and position 2 of adenine 37 in tRNAs. The protein is Probable dual-specificity RNA methyltransferase RlmN of Streptococcus suis (strain 98HAH33).